The sequence spans 451 residues: Bifunctional protein GlmU (451 aa).

Residues 1–229 (MERFAVILAA…FDETIGVNDR (229 aa)) are pyrophosphorylase. Residues 8–11 (LAAG), K22, Q72, and 77–78 (GT) each bind UDP-N-acetyl-alpha-D-glucosamine. D102 contacts Mg(2+). G139, E154, N169, and N227 together coordinate UDP-N-acetyl-alpha-D-glucosamine. N227 is a binding site for Mg(2+). Residues 230–250 (VALSQAEAIMRKRTNERLMRE) are linker. The interval 251–451 (GVTFMDPAST…QTNKEGYTKR (201 aa)) is N-acetyltransferase. R332 and K350 together coordinate UDP-N-acetyl-alpha-D-glucosamine. Catalysis depends on H362, which acts as the Proton acceptor. UDP-N-acetyl-alpha-D-glucosamine-binding residues include Y365 and N376. Residues 385–386 (NY), A422, and R439 contribute to the acetyl-CoA site.

It in the N-terminal section; belongs to the N-acetylglucosamine-1-phosphate uridyltransferase family. The protein in the C-terminal section; belongs to the transferase hexapeptide repeat family. In terms of assembly, homotrimer. Requires Mg(2+) as cofactor.

The protein resides in the cytoplasm. It catalyses the reaction alpha-D-glucosamine 1-phosphate + acetyl-CoA = N-acetyl-alpha-D-glucosamine 1-phosphate + CoA + H(+). The catalysed reaction is N-acetyl-alpha-D-glucosamine 1-phosphate + UTP + H(+) = UDP-N-acetyl-alpha-D-glucosamine + diphosphate. The protein operates within nucleotide-sugar biosynthesis; UDP-N-acetyl-alpha-D-glucosamine biosynthesis; N-acetyl-alpha-D-glucosamine 1-phosphate from alpha-D-glucosamine 6-phosphate (route II): step 2/2. It functions in the pathway nucleotide-sugar biosynthesis; UDP-N-acetyl-alpha-D-glucosamine biosynthesis; UDP-N-acetyl-alpha-D-glucosamine from N-acetyl-alpha-D-glucosamine 1-phosphate: step 1/1. Its pathway is bacterial outer membrane biogenesis; LPS lipid A biosynthesis. Functionally, catalyzes the last two sequential reactions in the de novo biosynthetic pathway for UDP-N-acetylglucosamine (UDP-GlcNAc). The C-terminal domain catalyzes the transfer of acetyl group from acetyl coenzyme A to glucosamine-1-phosphate (GlcN-1-P) to produce N-acetylglucosamine-1-phosphate (GlcNAc-1-P), which is converted into UDP-GlcNAc by the transfer of uridine 5-monophosphate (from uridine 5-triphosphate), a reaction catalyzed by the N-terminal domain. The chain is Bifunctional protein GlmU from Exiguobacterium sp. (strain ATCC BAA-1283 / AT1b).